A 218-amino-acid chain; its full sequence is Adenylate kinase (218 aa).

Position 10–15 (10–15 (GAGKGT)) interacts with ATP. The tract at residues 30–59 (STGDMLRAAVKAGTPLGLEAKKVMDAGGLV) is NMP. AMP is bound by residues Thr-31, Arg-36, 57 to 59 (GLV), 85 to 88 (GFPR), and Gln-92. The tract at residues 122 to 159 (GRRVHPASGRVYHTKYNPPKVEGKDDETGDELVQRDDD) is LID. Residues Arg-123 and 132–133 (VY) each bind ATP. The segment at 139-160 (PPKVEGKDDETGDELVQRDDDQ) is disordered. Positions 156 and 167 each coordinate AMP. Gly-203 contacts ATP.

This sequence belongs to the adenylate kinase family. As to quaternary structure, monomer.

The protein resides in the cytoplasm. The catalysed reaction is AMP + ATP = 2 ADP. The protein operates within purine metabolism; AMP biosynthesis via salvage pathway; AMP from ADP: step 1/1. Its function is as follows. Catalyzes the reversible transfer of the terminal phosphate group between ATP and AMP. Plays an important role in cellular energy homeostasis and in adenine nucleotide metabolism. This Alcanivorax borkumensis (strain ATCC 700651 / DSM 11573 / NCIMB 13689 / SK2) protein is Adenylate kinase.